The sequence spans 62 residues: Small ribosomal subunit protein bS21 (62 aa).

Residues Glu-43–Tyr-62 form a disordered region. Basic residues predominate over residues Lys-44 to Tyr-62.

The protein belongs to the bacterial ribosomal protein bS21 family.

This is Small ribosomal subunit protein bS21 from Trichodesmium erythraeum (strain IMS101).